Consider the following 157-residue polypeptide: Peptide methionine sulfoxide reductase MsrA (157 aa).

The active site involves Cys-13.

Belongs to the MsrA Met sulfoxide reductase family.

It carries out the reaction L-methionyl-[protein] + [thioredoxin]-disulfide + H2O = L-methionyl-(S)-S-oxide-[protein] + [thioredoxin]-dithiol. It catalyses the reaction [thioredoxin]-disulfide + L-methionine + H2O = L-methionine (S)-S-oxide + [thioredoxin]-dithiol. Has an important function as a repair enzyme for proteins that have been inactivated by oxidation. Catalyzes the reversible oxidation-reduction of methionine sulfoxide in proteins to methionine. The polypeptide is Peptide methionine sulfoxide reductase MsrA (Methanococcus maripaludis (strain C7 / ATCC BAA-1331)).